The chain runs to 926 residues: DNA topoisomerase 3-alpha (926 aa).

The Toprim domain maps to 10 to 154; the sequence is TVLNVAEKPS…NLFIRRAHFS (145 aa). Residues Glu16, Asp123, and Asp125 each coordinate Mg(2+). One can recognise a Topo IA-type catalytic domain in the interval 172–604; it reads NQLFAEAVDA…CLQQMKACFL (433 aa). Positions 219–224 are interaction with DNA; the sequence is SYGPCQ. Tyr342 serves as the catalytic O-(5'-phospho-DNA)-tyrosine intermediate. Residues 642–670 form a C4-type zinc finger; the sequence is CNLCNESDMALRKNRDGNFMVGCMNYPQC. 2 disordered regions span residues 740–760 and 775–806; these read SRSQ…QGSN and HAST…TVSC. Positions 750 to 760 are enriched in polar residues; it reads TAPSNNIQGSN. The CCHC-type 1 zinc finger occupies 767-782; sequence CIHCQQRGHASTNCPS. Zn(2+)-binding residues include Cys806, Cys809, Cys831, and Cys836. Residues 806–845 form a GRF-type zinc finger; that stretch reads CNTCGSQCVLRTANTEANRGRQFFSCPTQGCSFFAWEDSI. The segment at 849–890 is disordered; that stretch reads SGNATTGSNSGGSGRRGSRGRGRGGRGGQSSGGRRGSGTSFV. The span at 873–884 shows a compositional bias: gly residues; that stretch reads GRGGQSSGGRRG. Residues 901–917 form a CCHC-type 2 zinc finger; it reads RCFSCGDPSHFANACPN.

The protein belongs to the type IA topoisomerase family. In terms of assembly, component of the RMI complex, containing at least TOP3A and RMI1. The RMI complex interacts with RECQL4A. The cofactor is Mg(2+).

It carries out the reaction ATP-independent breakage of single-stranded DNA, followed by passage and rejoining.. Its function is as follows. Releases the supercoiling and torsional tension of DNA introduced during the DNA replication and transcription by transiently cleaving and rejoining one strand of the DNA duplex. Introduces a single-strand break via transesterification at a target site in duplex DNA. The scissile phosphodiester is attacked by the catalytic tyrosine of the enzyme, resulting in the formation of a DNA-(5'-phosphotyrosyl)-enzyme intermediate and the expulsion of a 3'-OH DNA strand. The free DNA strand then undergoes passage around the unbroken strand thus removing DNA supercoils. Finally, in the religation step, the DNA 3'-OH attacks the covalent intermediate to expel the active-site tyrosine and restore the DNA phosphodiester backbone. Essential component of the RMI complex, a complex that plays an important role in the resolution step of homologous recombination, in a process called Holliday Junction dissolution, to limit DNA crossover formation in cells. Together with RMI1, is essential for the resolution of meiotic recombination intermediates, a step that prevents entanglement of the parental chromosomes. May have DNA decatenation activity. This is DNA topoisomerase 3-alpha (TOP3A) from Arabidopsis thaliana (Mouse-ear cress).